The following is a 462-amino-acid chain: CUGBP Elav-like family member 3-B (462 aa).

RRM domains are found at residues 7–88 (IKLF…PADS), 95–175 (RKLF…FADT), and 377–455 (CNIF…LKRP).

It belongs to the CELF/BRUNOL family.

It localises to the nucleus. Its subcellular location is the cytoplasm. Its function is as follows. RNA-binding protein that may be involved in the regulation of pre-mRNA alternative splicing. The sequence is that of CUGBP Elav-like family member 3-B (tnrc4-b) from Xenopus laevis (African clawed frog).